The following is a 217-amino-acid chain: MNLILMGLPGAGKGTQAEKIVNDYGIPHISTGDMFRAAMKNETELGLKAKSFIDAGDLVPDEVTIGIVKERLSEDDCENGFLLDGFPRTIAQAEALEGILSSLGKQLDHVLNIAVPKELLMERLTGRRVSPTTGKTYHIVYNPPKVEGKCDIDGSDLIQRDDDKPETVKRRLEVNEKQTKPLIDFYEAKGYLRQVDGNQDMNTVYADIKAILSEKRA.

10–15 (GAGKGT) is a binding site for ATP. The NMP stretch occupies residues 30 to 59 (STGDMFRAAMKNETELGLKAKSFIDAGDLV). Residues Thr31, Arg36, 57–59 (DLV), 85–88 (GFPR), and Gln92 contribute to the AMP site. The segment at 126–163 (GRRVSPTTGKTYHIVYNPPKVEGKCDIDGSDLIQRDDD) is LID. Residues Arg127 and 136–137 (TY) contribute to the ATP site. Positions 160 and 171 each coordinate AMP. Gln199 lines the ATP pocket.

The protein belongs to the adenylate kinase family. Monomer.

It localises to the cytoplasm. The catalysed reaction is AMP + ATP = 2 ADP. It functions in the pathway purine metabolism; AMP biosynthesis via salvage pathway; AMP from ADP: step 1/1. Catalyzes the reversible transfer of the terminal phosphate group between ATP and AMP. Plays an important role in cellular energy homeostasis and in adenine nucleotide metabolism. The polypeptide is Adenylate kinase (Shouchella clausii (strain KSM-K16) (Alkalihalobacillus clausii)).